The primary structure comprises 112 residues: Large ribosomal subunit protein uL22 (112 aa).

It belongs to the universal ribosomal protein uL22 family. In terms of assembly, part of the 50S ribosomal subunit.

This protein binds specifically to 23S rRNA; its binding is stimulated by other ribosomal proteins, e.g. L4, L17, and L20. It is important during the early stages of 50S assembly. It makes multiple contacts with different domains of the 23S rRNA in the assembled 50S subunit and ribosome. Functionally, the globular domain of the protein is located near the polypeptide exit tunnel on the outside of the subunit, while an extended beta-hairpin is found that lines the wall of the exit tunnel in the center of the 70S ribosome. This Mesoplasma florum (strain ATCC 33453 / NBRC 100688 / NCTC 11704 / L1) (Acholeplasma florum) protein is Large ribosomal subunit protein uL22.